Reading from the N-terminus, the 627-residue chain is MPKTLHEIPRERPATPLLDRASSPAELRRLGEADLETLADELRQYLLYTVGQTGGHFGAGLGVVELTIALHYVFDTPDDRLVWDVGHQAYPHKILTERRELMGTLRQKDGLAAFPRRAESEYDTFGVGHSSTSISAALGMAIAARLQGKERKSVAVIGDGALTAGMAFEALNHASEVDADMLVILNDNDMSISHNVGGLSNYLAKILSSRTYSSMREGSKKVLSRLPGAWEIARRTEEYAKGMLVPGTLFEELGWNYIGPIDGHDLPTLVATLRNMRDMKGPQFLHVVTKKGKGFAPAELDPIGYHAITKLEAPGSAPKKTGGPKYSSVFGQWLCDMAAQDARLLGITPAMKEGSDLVAFSERYPERYFDVAIAEQHAVTLAAGMACEGMKPVVAIYSTFLQRAYDQLIHDVAVQHLDVLFAIDRAGLVGEDGPTHAGSFDISYLRCIPGMLVMTPSDEDELRKLLTTGYLFDGPAAVRYPRGSGPNHPIDPDLQPVEIGKGVVRRRGGKVALLVFGVQLAEAMKVAEGLDATVADMRFVKPLDEALVRELAGSHELLVSIEENAVMGGAGSAVGEFLAREGLEVPLLQLGLPDYYVEHAKPSEMLAECGLDAAGIEKAVRQRLDRQ.

Residues His-87 and 128–130 (GHS) each bind thiamine diphosphate. Asp-159 is a Mg(2+) binding site. Residues 160 to 161 (GA), Asn-188, Phe-295, and Glu-375 each bind thiamine diphosphate. Asn-188 contacts Mg(2+).

It belongs to the transketolase family. DXPS subfamily. In terms of assembly, homodimer. It depends on Mg(2+) as a cofactor. Thiamine diphosphate serves as cofactor.

The enzyme catalyses D-glyceraldehyde 3-phosphate + pyruvate + H(+) = 1-deoxy-D-xylulose 5-phosphate + CO2. It functions in the pathway metabolic intermediate biosynthesis; 1-deoxy-D-xylulose 5-phosphate biosynthesis; 1-deoxy-D-xylulose 5-phosphate from D-glyceraldehyde 3-phosphate and pyruvate: step 1/1. Its function is as follows. Catalyzes the acyloin condensation reaction between C atoms 2 and 3 of pyruvate and glyceraldehyde 3-phosphate to yield 1-deoxy-D-xylulose-5-phosphate (DXP). This is 1-deoxy-D-xylulose-5-phosphate synthase from Pseudomonas paraeruginosa (strain DSM 24068 / PA7) (Pseudomonas aeruginosa (strain PA7)).